We begin with the raw amino-acid sequence, 332 residues long: DNA-directed RNA polymerase subunit alpha (332 aa).

Positions Met-1–Glu-231 are alpha N-terminal domain (alpha-NTD). Positions Leu-262–Asn-332 are alpha C-terminal domain (alpha-CTD).

Belongs to the RNA polymerase alpha chain family. In terms of assembly, in plastids the minimal PEP RNA polymerase catalytic core is composed of four subunits: alpha, beta, beta', and beta''. When a (nuclear-encoded) sigma factor is associated with the core the holoenzyme is formed, which can initiate transcription.

The protein resides in the plastid. It carries out the reaction RNA(n) + a ribonucleoside 5'-triphosphate = RNA(n+1) + diphosphate. In terms of biological role, DNA-dependent RNA polymerase catalyzes the transcription of DNA into RNA using the four ribonucleoside triphosphates as substrates. The sequence is that of DNA-directed RNA polymerase subunit alpha from Cuscuta japonica (Japanese dodder).